Reading from the N-terminus, the 291-residue chain is Lipoyl synthase, mitochondrial (291 aa).

Residues Cys45, Cys50, Cys56, Cys71, Cys75, Cys78, and Ser283 each contribute to the [4Fe-4S] cluster site. The Radical SAM core domain maps to Trp57–Arg272.

It belongs to the radical SAM superfamily. Lipoyl synthase family. Requires [4Fe-4S] cluster as cofactor.

The protein resides in the mitochondrion. The enzyme catalyses [[Fe-S] cluster scaffold protein carrying a second [4Fe-4S](2+) cluster] + N(6)-octanoyl-L-lysyl-[protein] + 2 oxidized [2Fe-2S]-[ferredoxin] + 2 S-adenosyl-L-methionine + 4 H(+) = [[Fe-S] cluster scaffold protein] + N(6)-[(R)-dihydrolipoyl]-L-lysyl-[protein] + 4 Fe(3+) + 2 hydrogen sulfide + 2 5'-deoxyadenosine + 2 L-methionine + 2 reduced [2Fe-2S]-[ferredoxin]. It participates in protein modification; protein lipoylation via endogenous pathway; protein N(6)-(lipoyl)lysine from octanoyl-[acyl-carrier-protein]: step 2/2. Functionally, catalyzes the radical-mediated insertion of two sulfur atoms into the C-6 and C-8 positions of the octanoyl moiety bound to the lipoyl domains of lipoate-dependent enzymes, thereby converting the octanoylated domains into lipoylated derivatives. The protein is Lipoyl synthase, mitochondrial of Nematostella vectensis (Starlet sea anemone).